An 88-amino-acid polypeptide reads, in one-letter code: uncharacterized protein (88 aa).

The segment at A1–E54 is disordered. Positions G16–P53 are enriched in acidic residues.

Predominantly in developing fruit.

This is an uncharacterized protein from Fragaria ananassa (Strawberry).